A 92-amino-acid polypeptide reads, in one-letter code: Protamine-2 (92 aa).

Positions 1–76 (MVRCRVRSPS…RRACRHRRHR (76 aa)) are disordered. Residues 7-20 (RSPSESPQQGSGQQ) show a composition bias toward low complexity. Phosphoserine is present on residues S8 and S10. The segment covering 21 to 36 (RENERQDQDQELRPED) has biased composition (basic and acidic residues). Positions 42–76 (RTHRGRYHYRHRSHTRRRRSCRRRRRRACRHRRHR) are enriched in basic residues.

It belongs to the protamine P2 family. As to quaternary structure, interacts with TDRP. In terms of processing, proteolytic processing into mature chains is required for histone eviction during spermatogenesis. Transition proteins (TNP1 and TNP2) are required for processing. As to expression, testis.

The protein resides in the nucleus. Its subcellular location is the chromosome. Protamines substitute for histones in the chromatin of sperm during the haploid phase of spermatogenesis. They compact sperm DNA into a highly condensed, stable and inactive complex. The chain is Protamine-2 (PRM2) from Sus scrofa (Pig).